Reading from the N-terminus, the 115-residue chain is UPF0597 protein HI_0855 (115 aa).

The protein belongs to the UPF0597 family.

This Haemophilus influenzae (strain ATCC 51907 / DSM 11121 / KW20 / Rd) protein is UPF0597 protein HI_0855.